A 196-amino-acid polypeptide reads, in one-letter code: Large ribosomal subunit protein uL18 (196 aa).

The protein belongs to the universal ribosomal protein uL18 family. As to quaternary structure, part of the 50S ribosomal subunit. Contacts the 5S and 23S rRNAs.

In terms of biological role, this is one of the proteins that bind and probably mediate the attachment of the 5S RNA into the large ribosomal subunit, where it forms part of the central protuberance. This Thermofilum pendens (strain DSM 2475 / Hrk 5) protein is Large ribosomal subunit protein uL18.